The primary structure comprises 356 residues: uncharacterized protein (356 aa).

A helical transmembrane segment spans residues 8–28 (ILGFVLFVLGAAIFLTEVMHS).

To C.elegans C41C4.1 and C18B2.1.

It localises to the membrane. This is an uncharacterized protein from Caenorhabditis elegans.